Reading from the N-terminus, the 236-residue chain is Purine nucleoside phosphorylase DeoD-type (236 aa).

His5 contacts a purine D-ribonucleoside. Phosphate is bound by residues Gly21, Arg25, Arg44, and Arg88–Thr91. A purine D-ribonucleoside is bound by residues Glu180 to Glu182 and Ser204 to Asp205. Asp205 acts as the Proton donor in catalysis.

It belongs to the PNP/UDP phosphorylase family. In terms of assembly, homohexamer; trimer of homodimers.

It catalyses the reaction a purine D-ribonucleoside + phosphate = a purine nucleobase + alpha-D-ribose 1-phosphate. It carries out the reaction a purine 2'-deoxy-D-ribonucleoside + phosphate = a purine nucleobase + 2-deoxy-alpha-D-ribose 1-phosphate. Functionally, catalyzes the reversible phosphorolytic breakdown of the N-glycosidic bond in the beta-(deoxy)ribonucleoside molecules, with the formation of the corresponding free purine bases and pentose-1-phosphate. In Shewanella baltica (strain OS155 / ATCC BAA-1091), this protein is Purine nucleoside phosphorylase DeoD-type.